Reading from the N-terminus, the 385-residue chain is DnaJ homolog subfamily C member 28 (385 aa).

The region spanning 48–132 (EYYRLLNLDE…EGKFKYNTPQ (85 aa)) is the J domain. The stretch at 261-318 (KEIKDTIEQLREALLMSRKKLGNPLSPTEQKQWAQVCEQFQEKIRKLNKRINDFNLIV) forms a coiled coil.

May have a role in protein folding or as a chaperone. The polypeptide is DnaJ homolog subfamily C member 28 (Dnajc28) (Mus musculus (Mouse)).